The chain runs to 720 residues: Long chain acyl-CoA synthetase 8 (720 aa).

An N-acetylmethionine modification is found at methionine 1. 279 to 290 (IMFTSGSTGLPK) serves as a coordination point for ATP. Residues 554 to 582 (DEKGTRWFYTGDIGRFHPDGCLEVIDRKK) are fatty acid-binding.

This sequence belongs to the ATP-dependent AMP-binding enzyme family. The cofactor is Mg(2+).

It carries out the reaction a long-chain fatty acid + ATP + CoA = a long-chain fatty acyl-CoA + AMP + diphosphate. It participates in lipid metabolism; fatty acid metabolism. In terms of biological role, activation of long-chain fatty acids for both synthesis of cellular lipids, and degradation via beta-oxidation. Preferentially uses palmitate, palmitoleate, oleate and linoleate. In Arabidopsis thaliana (Mouse-ear cress), this protein is Long chain acyl-CoA synthetase 8 (LACS8).